Consider the following 232-residue polypeptide: Large ribosomal subunit protein uL1 (232 aa).

It belongs to the universal ribosomal protein uL1 family. As to quaternary structure, part of the 50S ribosomal subunit.

Its function is as follows. Binds directly to 23S rRNA. The L1 stalk is quite mobile in the ribosome, and is involved in E site tRNA release. In terms of biological role, protein L1 is also a translational repressor protein, it controls the translation of the L11 operon by binding to its mRNA. This is Large ribosomal subunit protein uL1 from Aromatoleum aromaticum (strain DSM 19018 / LMG 30748 / EbN1) (Azoarcus sp. (strain EbN1)).